Reading from the N-terminus, the 348-residue chain is Photosystem II protein D1 (348 aa).

A run of 3 helical transmembrane segments spans residues Tyr33–Val50, His122–Phe137, and Trp146–Ala160. Residue His122 coordinates chlorophyll a. Trp130 serves as a coordination point for pheophytin a. Asp174 and Glu193 together coordinate [CaMn4O5] cluster. Residues Phe201 to Leu222 traverse the membrane as a helical segment. Residue His202 participates in chlorophyll a binding. Residues His219 and Ser268–Phe269 each bind a quinone. His219 serves as a coordination point for Fe cation. His276 is a Fe cation binding site. Residues Phe278–Leu292 form a helical membrane-spanning segment. Residues His336, Glu337, Asp346, and Ala348 each coordinate [CaMn4O5] cluster.

Belongs to the reaction center PufL/M/PsbA/D family. In terms of assembly, PSII is composed of 1 copy each of membrane proteins PsbA, PsbB, PsbC, PsbD, PsbE, PsbF, PsbH, PsbI, PsbJ, PsbK, PsbL, PsbM, PsbT, PsbX, PsbY, PsbZ, Psb30/Ycf12, at least 3 peripheral proteins of the oxygen-evolving complex and a large number of cofactors. It forms dimeric complexes. The D1/D2 heterodimer binds P680, chlorophylls that are the primary electron donor of PSII, and subsequent electron acceptors. It shares a non-heme iron and each subunit binds pheophytin, quinone, additional chlorophylls, carotenoids and lipids. D1 provides most of the ligands for the Mn4-Ca-O5 cluster of the oxygen-evolving complex (OEC). There is also a Cl(-1) ion associated with D1 and D2, which is required for oxygen evolution. The PSII complex binds additional chlorophylls, carotenoids and specific lipids. serves as cofactor. In terms of processing, tyr-165 forms a radical intermediate that is referred to as redox-active TyrZ, YZ or Y-Z.

The protein resides in the plastid. The protein localises to the chloroplast thylakoid membrane. It catalyses the reaction 2 a plastoquinone + 4 hnu + 2 H2O = 2 a plastoquinol + O2. Functionally, photosystem II (PSII) is a light-driven water:plastoquinone oxidoreductase that uses light energy to abstract electrons from H(2)O, generating O(2) and a proton gradient subsequently used for ATP formation. It consists of a core antenna complex that captures photons, and an electron transfer chain that converts photonic excitation into a charge separation. The D1/D2 (PsbA/PsbD) reaction center heterodimer binds P680, the primary electron donor of PSII as well as several subsequent electron acceptors. The sequence is that of Photosystem II protein D1 from Heterocapsa rotundata (Dinoflagellate).